The chain runs to 472 residues: MAGPGWGPPRLDGFILTERLGSGTYATVYKAYAKKDTREVVAIKCVAKKSLNKASVENLLTEIEILKGIRHPHIVQLKDFQWDSDNIYLIMEFCAGGDLSRFIHTRRILPEKVARVFMQQLASALQFLHERNISHLDLKPQNILLSSLEKPHLKLADFGFAQHMSPWDEKHVLRGSPLYMAPEMVCQRQYDARVDLWSMGVILYEALFGQPPFASRSFSELEEKIRSNRVIELPLRPLLSRDCRDLLQRLLERDPSRRISFQDFFAHPWVDLEHMPSGESLGRATALVVQAVKKDQEGDSAAALSLYCKALDFFVPALHYEVDAQRKEAIKAKVGQYVSRAEELKAIVSSSNQALLRQGTSARDLLREMARDKPRLLAALEVASAAMAKEEAAGGEQDALDLYQHSLGELLLLLAAEPPGRRRELLHTEVQNLMARAEYLKEQVKMRESRWEADTLDKEGLSESVRSSCTLQ.

Residues Phe14–Val270 form the Protein kinase domain. Residues Leu20–Val28 and Lys44 each bind ATP. Asp137 acts as the Proton acceptor in catalysis. Phosphoserine is present on Ser176. The MIT 1 domain occupies Ser280 to Val348. Phosphoserine; by autocatalysis is present on residues Ser300, Ser350, Ser384, and Ser464. The MIT 2 domain occupies Arg375–Val444.

This sequence belongs to the protein kinase superfamily. Ser/Thr protein kinase family. APG1/unc-51/ULK1 subfamily. In terms of assembly, interacts (via protein kinase domain) with SUFU. Autophosphorylated. Autophosphorylation is blocked by interaction with SUFU. Widely expressed. Highest levels observed in fetal brain. In adult tissues, high levels in brain, liver and kidney, moderate levels in testis and adrenal gland and low levels in heart, lung, stomach, thymus, prostate and placenta. In the brain, highest expression in the hippocampus, high levels also detected in the cerebellum, olfactory bulb and optic nerve. In the central nervous system, lowest levels in the spinal cord.

It localises to the cytoplasm. The catalysed reaction is L-seryl-[protein] + ATP = O-phospho-L-seryl-[protein] + ADP + H(+). The enzyme catalyses L-threonyl-[protein] + ATP = O-phospho-L-threonyl-[protein] + ADP + H(+). In terms of biological role, serine/threonine protein kinase that acts as a regulator of Sonic hedgehog (SHH) signaling and autophagy. Acts as a negative regulator of SHH signaling in the absence of SHH ligand: interacts with SUFU, thereby inactivating the protein kinase activity and preventing phosphorylation of GLI proteins (GLI1, GLI2 and/or GLI3). Positively regulates SHH signaling in the presence of SHH: dissociates from SUFU, autophosphorylates and mediates phosphorylation of GLI2, activating it and promoting its nuclear translocation. Phosphorylates in vitro GLI2, as well as GLI1 and GLI3, although less efficiently. Also acts as a regulator of autophagy: following cellular senescence, able to induce autophagy. The polypeptide is Serine/threonine-protein kinase ULK3 (ULK3) (Homo sapiens (Human)).